The chain runs to 1262 residues: Histone-lysine N-methyltransferase eggless (1262 aa).

The tract at residues 1-194 is disordered; sequence MSGQPTAVDC…MEVDQDVEES (194 aa). Basic and acidic residues-rich tracts occupy residues 26–41, 50–61, and 81–99; these read ASRE…KGEN, AAKDVEIEELTH, and APDE…KGEN. Residues 157–166 show a composition bias toward low complexity; the sequence is SSISSPTSES. Residues 167–179 are compositionally biased toward basic and acidic residues; sequence FPEKDEKTNKENE. Position 215 is a phosphoserine (Ser-215). Phosphothreonine is present on Thr-217. A coiled-coil region spans residues 353–420; the sequence is EKSDFSKNKL…LEKVQTTADK (68 aa). 2 consecutive Tudor domains span residues 529–602 and 629–686; these read RLTI…SEKV and QCTR…RETQ. Residues 743-764 form a disordered region; it reads SSAATPAGGRTNAGGVSTSNSA. Positions 818–884 constitute an MBD domain; that stretch reads LDSYSPLAKP…DNFDFTPDLK (67 aa). The Pre-SET domain occupies 946 to 1018; that stretch reads LCCDCEDDCS…NCLNRVVQFS (73 aa). The Zn(2+) site is built by Cys-948, Cys-950, Cys-954, Cys-960, Cys-962, Cys-1000, Cys-1004, Cys-1006, and Cys-1010. One can recognise an SET domain in the interval 1021–1237; that stretch reads MKLQVFKTSN…SGTELTWNYN (217 aa). Residues 1031-1033, Asp-1069, and Tyr-1071 each bind S-adenosyl-L-methionine; that span reads RGW. Residues 1086-1097 show a composition bias toward basic and acidic residues; sequence EGYESEVDHSDP. Residues 1086-1148 are disordered; it reads EGYESEVDHS…QSSELDSQER (63 aa). Residues 1098-1113 are compositionally biased toward acidic residues; sequence DAEEDNGGPDAEDDDD. Positions 1129–1141 are enriched in low complexity; sequence RSGSTQNSSTQSS. Residues Arg-1191 and 1194 to 1195 contribute to the S-adenosyl-L-methionine site; that span reads NH. Residues Cys-1197, Cys-1250, Cys-1252, and Cys-1257 each contribute to the Zn(2+) site. The region spanning 1246–1262 is the Post-SET domain; that stretch reads KVLYCQCGAPNCRLRLL.

The protein belongs to the class V-like SAM-binding methyltransferase superfamily. Histone-lysine methyltransferase family. Suvar3-9 subfamily. Expressed in ovary (at protein level).

Its subcellular location is the nucleus. It localises to the chromosome. It catalyses the reaction L-lysyl(9)-[histone H3] + 3 S-adenosyl-L-methionine = N(6),N(6),N(6)-trimethyl-L-lysyl(9)-[histone H3] + 3 S-adenosyl-L-homocysteine + 3 H(+). Functionally, histone methyltransferase that specifically trimethylates 'Lys-10' of histone H3 (H3K9me3) in ovary. H3K9me3 represents a specific tag for epigenetic transcriptional repression by recruiting Su(var)205/HP1 to methylated histones. Plays a central role during oogenesis. This chain is Histone-lysine N-methyltransferase eggless (egg), found in Drosophila melanogaster (Fruit fly).